Here is a 455-residue protein sequence, read N- to C-terminus: Oxidative stress induced growth inhibitor homolog osgn-1 (455 aa).

It belongs to the OKL38 family. The cofactor is NADPH.

It is found in the midbody. Functionally, monooxygenase catalytic activity. Involved in regulation of cytokinesis; promotes rho-1/RhoA activity, probably acting locally at the midbody in late cytokinesis. Monooxygenase activity is required to stabilize structures between primordial germ cells (PGCs), termed intercellular bridges. Dispensable for fertility. This Caenorhabditis elegans protein is Oxidative stress induced growth inhibitor homolog osgn-1.